Consider the following 600-residue polypeptide: Zinc metalloproteinase-disintegrin-like stejnihagin-B (600 aa).

An N-terminal signal peptide occupies residues 1-20 (MIEVLLVTICLAVFPYQGSS). Positions 21 to 191 (IILESGNVND…KASQLVVTAE (171 aa)) are excised as a propeptide. Gln192 is modified (pyrrolidone carboxylic acid). Positions 198-389 (RYVKLAIVAD…YNPQCILNAL (192 aa)) constitute a Peptidase M12B domain. 2 N-linked (GlcNAc...) asparagine glycosylation sites follow: Asn261 and Asn317. Cystine bridges form between Cys306-Cys384, Cys346-Cys368, and Cys348-Cys351. His331 is a binding site for Zn(2+). The active site involves Glu332. Positions 335 and 341 each coordinate Zn(2+). The Disintegrin domain maps to 397–483 (PPVCGNELLE…DCPTDSFHRN (87 aa)). Positions 399, 402, 404, 406, 409, and 412 each coordinate Ca(2+). 14 disulfide bridges follow: Cys400-Cys429, Cys411-Cys424, Cys413-Cys419, Cys423-Cys446, Cys437-Cys443, Cys442-Cys468, Cys455-Cys475, Cys462-Cys494, Cys487-Cys499, Cys506-Cys556, Cys521-Cys565, Cys534-Cys544, Cys551-Cys587, and Cys581-Cys593. A glycan (N-linked (GlcNAc...) asparagine) is linked at Asn425. The short motif at 461–463 (ECD) is the D/ECD-tripeptide element. Residue Asn467 is glycosylated (N-linked (GlcNAc...) asparagine). Asn513 carries N-linked (GlcNAc...) asparagine glycosylation.

The protein belongs to the venom metalloproteinase (M12B) family. P-III subfamily. P-IIIa sub-subfamily. In terms of assembly, monomer. Requires Zn(2+) as cofactor. Expressed by the venom gland.

The protein resides in the secreted. Its function is as follows. This metalloproteinase-disintegrin-like impairs hemostasis in the envenomed animal. The polypeptide is Zinc metalloproteinase-disintegrin-like stejnihagin-B (Trimeresurus stejnegeri (Chinese green tree viper)).